The sequence spans 155 residues: Large-conductance mechanosensitive channel (155 aa).

3 helical membrane-spanning segments follow: residues 16-36, 40-60, and 88-108; these read VVDM…VNNL, VILP…LYII, and GVFL…FLLV.

Belongs to the MscL family. In terms of assembly, homopentamer.

It is found in the cell inner membrane. Functionally, channel that opens in response to stretch forces in the membrane lipid bilayer. May participate in the regulation of osmotic pressure changes within the cell. The polypeptide is Large-conductance mechanosensitive channel (Chlorobium chlorochromatii (strain CaD3)).